Consider the following 493-residue polypeptide: Probable cytochrome P450 508A2 (493 aa).

The helical transmembrane segment at 1–21 (MIFGIIVYLFLIYILHNAYSK) threads the bilayer. Cys439 lines the heme pocket.

The protein belongs to the cytochrome P450 family. The cofactor is heme.

The protein resides in the membrane. The polypeptide is Probable cytochrome P450 508A2 (cyp508A2-1) (Dictyostelium discoideum (Social amoeba)).